The primary structure comprises 169 residues: MSVLQVLHYPDDRLRKVAAPVKEVNANIQRIVDDMFETMYAEEGIGLAATQVDIHQRIIVIDVSENRDQRLVLINPELLEKSGETGIEEGCLSIPEQRALVPRAAAVKIRALDRDGKPFELEADDLLAICIQHEMDHLVGKLFVDYLSPLKRQRIRQKLEKMAKLNARA.

Fe cation is bound by residues C91 and H133. E134 is a catalytic residue. H137 contributes to the Fe cation binding site.

Belongs to the polypeptide deformylase family. Requires Fe(2+) as cofactor.

It catalyses the reaction N-terminal N-formyl-L-methionyl-[peptide] + H2O = N-terminal L-methionyl-[peptide] + formate. Its function is as follows. Removes the formyl group from the N-terminal Met of newly synthesized proteins. Requires at least a dipeptide for an efficient rate of reaction. N-terminal L-methionine is a prerequisite for activity but the enzyme has broad specificity at other positions. This chain is Peptide deformylase, found in Serratia proteamaculans (strain 568).